The primary structure comprises 603 residues: Aspartate--tRNA(Asp/Asn) ligase (603 aa).

Positions 205–208 (QLFK) are aspartate. R227 contacts L-aspartate. Residues 227–229 (RDE) and Q236 contribute to the ATP site. H463 lines the L-aspartate pocket. E497 is a binding site for ATP. R504 lines the L-aspartate pocket. 549–552 (GMDR) is an ATP binding site.

This sequence belongs to the class-II aminoacyl-tRNA synthetase family. Type 1 subfamily. In terms of assembly, homodimer.

It is found in the cytoplasm. The enzyme catalyses tRNA(Asx) + L-aspartate + ATP = L-aspartyl-tRNA(Asx) + AMP + diphosphate. Functionally, aspartyl-tRNA synthetase with relaxed tRNA specificity since it is able to aspartylate not only its cognate tRNA(Asp) but also tRNA(Asn). Reaction proceeds in two steps: L-aspartate is first activated by ATP to form Asp-AMP and then transferred to the acceptor end of tRNA(Asp/Asn). This Anaeromyxobacter dehalogenans (strain 2CP-C) protein is Aspartate--tRNA(Asp/Asn) ligase.